A 664-amino-acid chain; its full sequence is Transketolase 1 (664 aa).

Residue His-26 coordinates substrate. Thiamine diphosphate-binding positions include His-66 and 114-116 (GPL). Residue Asp-155 participates in Mg(2+) binding. The thiamine diphosphate site is built by Gly-156 and Asn-185. Residues Asn-185 and Ile-187 each contribute to the Mg(2+) site. His-260, Arg-357, and Ser-384 together coordinate substrate. His-260 lines the thiamine diphosphate pocket. Residue Glu-411 is the Proton donor of the active site. Phe-437 is a binding site for thiamine diphosphate. 3 residues coordinate substrate: His-461, Asp-469, and Arg-520.

The protein belongs to the transketolase family. In terms of assembly, homodimer. Mg(2+) is required as a cofactor. It depends on Ca(2+) as a cofactor. Requires Mn(2+) as cofactor. Co(2+) serves as cofactor. The cofactor is thiamine diphosphate.

It catalyses the reaction D-sedoheptulose 7-phosphate + D-glyceraldehyde 3-phosphate = aldehydo-D-ribose 5-phosphate + D-xylulose 5-phosphate. Its function is as follows. Catalyzes the transfer of a two-carbon ketol group from a ketose donor to an aldose acceptor, via a covalent intermediate with the cofactor thiamine pyrophosphate. The polypeptide is Transketolase 1 (tkt1) (Vibrio vulnificus (strain CMCP6)).